A 417-amino-acid polypeptide reads, in one-letter code: MAVQAALLSSHPFIPFGFGGSADGLVSAFGSLDKGCCFEDDESGASAGALLSGSEGGDVREATRDLLSFIDSASSNIKLALDKPGKSKRKVNHRKYLQKQIKRCSGLMGTAPPRPASPSAADAPAKRPPGAPTVATPAHCKAAPRREATQAAAAASLQSRSLAALFDSLRHIPGGAETAGGAEAVSVPGLGAASAVGDGAGTAVSSVAPGTRKVPLRARNLPPSFFTEPSRVGCGGASGVPSGQGVSLGDLEKGAEAVEFFELLAPDFGSGNDSGVLMAADPLDPFPAGATVLRGPLELESGPFEQPAMVGNLLYPEPWNTPSCPQTKKPPVAGVRGGVTLNEPVRLLYPTALDSPGGEDAPALSSFTPFFPDCALPPPHQVSYDYSAGYSRAVYPSLWRPDGVWEGASGEEGGHPD.

The tract at residues 104–147 (CSGLMGTAPPRPASPSAADAPAKRPPGAPTVATPAHCKAAPRRE) is disordered.

The protein belongs to the FAM181 family.

This chain is Protein FAM181B (Fam181b), found in Mus musculus (Mouse).